The sequence spans 190 residues: LIM domain-containing protein WLIM1 (190 aa).

Ala-2 carries the N-acetylalanine modification. Positions 8–68 (QKCMACDKTV…RPHFDQNFKR (61 aa)) constitute an LIM zinc-binding 1 domain. Positions 74 to 98 (KSFEGTPKIGKPDRPLEGERPAGTK) are disordered. The span at 83-95 (GKPDRPLEGERPA) shows a compositional bias: basic and acidic residues. Residues 108-168 (EKCVGCDKTV…KHHHIQLIKE (61 aa)) form the LIM zinc-binding 2 domain.

In terms of assembly, interacts with F-actin. In terms of tissue distribution, expressed in roots, leaves, stems, flowers and siliques. Not detected in pollen.

The protein resides in the cytoplasm. The protein localises to the cytoskeleton. In terms of biological role, binds to actin filaments and promotes cross-linking into thick bundles. Has an actin-stabilizing activity. The actin regulatory activities are not regulated by pH and [Ca(2+)]. The sequence is that of LIM domain-containing protein WLIM1 from Arabidopsis thaliana (Mouse-ear cress).